Here is a 511-residue protein sequence, read N- to C-terminus: Cytochrome P450 705A5 (511 aa).

Residues 12 to 30 (CFIFLLLCLFSRLSYDLFF) form a helical membrane-spanning segment. Cys-454 lines the heme pocket.

It belongs to the cytochrome P450 family. The cofactor is heme. As to expression, expressed primarily in the root epidermis.

Its subcellular location is the membrane. Functionally, converts thalian-diol to a desaturated thalian-diol. This is Cytochrome P450 705A5 (CYP705A5) from Arabidopsis thaliana (Mouse-ear cress).